A 255-amino-acid chain; its full sequence is Zinc import ATP-binding protein ZnuC (255 aa).

In terms of domain architecture, ABC transporter spans 5–220 (VALEHIAVAF…PDFIAMFGYR (216 aa)).

Belongs to the ABC transporter superfamily. Zinc importer (TC 3.A.1.15.5) family. The complex is composed of two ATP-binding proteins (ZnuC), two transmembrane proteins (ZnuB) and a solute-binding protein (ZnuA).

The protein resides in the cell inner membrane. The catalysed reaction is Zn(2+)(out) + ATP(in) + H2O(in) = Zn(2+)(in) + ADP(in) + phosphate(in) + H(+)(in). Functionally, part of the ABC transporter complex ZnuABC involved in zinc import. Responsible for energy coupling to the transport system. This chain is Zinc import ATP-binding protein ZnuC, found in Sodalis glossinidius (strain morsitans).